The following is a 238-amino-acid chain: Putative tyrosine-protein phosphatase OCA1 (238 aa).

Residues 1–43 (MTSKVGEYEDVPEDESRLTEENVSVPEEEVEDEDEEEDDDDDH) are disordered. Threonine 2 is modified (N-acetylthreonine). Residue serine 24 is modified to Phosphoserine. Residues 26–42 (PEEEVEDEDEEEDDDDD) show a composition bias toward acidic residues. A Tyrosine-protein phosphatase domain is found at 72–230 (NFCPVERYLY…LVKIDKNKAP (159 aa)). The Phosphocysteine intermediate role is filled by cysteine 168.

Belongs to the protein-tyrosine phosphatase family.

It is found in the cytoplasm. It carries out the reaction O-phospho-L-tyrosyl-[protein] + H2O = L-tyrosyl-[protein] + phosphate. In terms of biological role, putative tyrosine-protein phosphatase required for protection against superoxide stress. Involved in cell-cycle delay in response to linoleic acid hydroperoxide (LoaOOH). This Saccharomyces cerevisiae (strain YJM789) (Baker's yeast) protein is Putative tyrosine-protein phosphatase OCA1 (OCA1).